The primary structure comprises 356 residues: Histidinol-phosphate aminotransferase (356 aa).

An N6-(pyridoxal phosphate)lysine modification is found at lysine 222.

The protein belongs to the class-II pyridoxal-phosphate-dependent aminotransferase family. Histidinol-phosphate aminotransferase subfamily. As to quaternary structure, homodimer. Pyridoxal 5'-phosphate serves as cofactor.

It carries out the reaction L-histidinol phosphate + 2-oxoglutarate = 3-(imidazol-4-yl)-2-oxopropyl phosphate + L-glutamate. It participates in amino-acid biosynthesis; L-histidine biosynthesis; L-histidine from 5-phospho-alpha-D-ribose 1-diphosphate: step 7/9. This Lactiplantibacillus plantarum (strain ATCC BAA-793 / NCIMB 8826 / WCFS1) (Lactobacillus plantarum) protein is Histidinol-phosphate aminotransferase.